We begin with the raw amino-acid sequence, 569 residues long: Urease subunit alpha (569 aa).

Residues His136, His138, and Lys219 each contribute to the Ni(2+) site. An N6-carboxylysine modification is found at Lys219. His221 contacts substrate. Ni(2+) is bound by residues His248 and His274. The active-site Proton donor is the His322. Asp362 is a Ni(2+) binding site.

Belongs to the metallo-dependent hydrolases superfamily. Urease alpha subunit family. Heterotrimer of UreA (gamma), UreB (beta) and UreC (alpha) subunits. Three heterotrimers associate to form the active enzyme. It depends on Ni cation as a cofactor. Carboxylation allows a single lysine to coordinate two nickel ions.

The protein resides in the cytoplasm. The enzyme catalyses urea + 2 H2O + H(+) = hydrogencarbonate + 2 NH4(+). It participates in nitrogen metabolism; urea degradation; CO(2) and NH(3) from urea (urease route): step 1/1. In Dinoroseobacter shibae (strain DSM 16493 / NCIMB 14021 / DFL 12), this protein is Urease subunit alpha.